We begin with the raw amino-acid sequence, 438 residues long: Putative F-box/FBD/LRR-repeat protein At5g44950 (438 aa).

The region spanning 3–49 (RDRISELPDGLLNHILMYLHIEESIRTSVLSSRWRKLWLKVPGLDVN) is the F-box domain. LRR repeat units follow at residues 246–275 (LSSLVKIDLDTEFNLKFGLGSPLEPEDLTK) and 286–310 (ISSVKHMIISHPTLEVLYRYSKIGQ). An FBD domain is found at 355–407 (PEQIDFTNLPRCLISTLEYVEIKQLTMREESGIKLVKYFLENSAVLKKLTLSF).

The sequence is that of Putative F-box/FBD/LRR-repeat protein At5g44950 from Arabidopsis thaliana (Mouse-ear cress).